Reading from the N-terminus, the 422-residue chain is Gamma-glutamyl phosphate reductase (422 aa).

Belongs to the gamma-glutamyl phosphate reductase family.

It localises to the cytoplasm. The enzyme catalyses L-glutamate 5-semialdehyde + phosphate + NADP(+) = L-glutamyl 5-phosphate + NADPH + H(+). The protein operates within amino-acid biosynthesis; L-proline biosynthesis; L-glutamate 5-semialdehyde from L-glutamate: step 2/2. Catalyzes the NADPH-dependent reduction of L-glutamate 5-phosphate into L-glutamate 5-semialdehyde and phosphate. The product spontaneously undergoes cyclization to form 1-pyrroline-5-carboxylate. This Saccharophagus degradans (strain 2-40 / ATCC 43961 / DSM 17024) protein is Gamma-glutamyl phosphate reductase.